We begin with the raw amino-acid sequence, 151 residues long: Large ribosomal subunit protein uL15 (151 aa).

A disordered region spans residues 1–51; that stretch reads MKSLRLEDAVPQSGSRHRKLRVGRGHSAGQGKTSGRGMRGQKCRSGGGVRP. The span at 15–24 shows a compositional bias: basic residues; sequence SRHRKLRVGR. Residues 26–38 are compositionally biased toward gly residues; the sequence is HSAGQGKTSGRGM.

It belongs to the universal ribosomal protein uL15 family. As to quaternary structure, part of the 50S ribosomal subunit.

Its function is as follows. Binds to the 23S rRNA. The polypeptide is Large ribosomal subunit protein uL15 (Gloeobacter violaceus (strain ATCC 29082 / PCC 7421)).